Here is a 404-residue protein sequence, read N- to C-terminus: Caspase-1 (404 aa).

The CARD domain occupies M1–T91. A propeptide spanning residues M1–D119 is cleaved from the precursor. The segment at F111–S132 is disordered. Residues H237 and C285 contribute to the active site. A propeptide spanning residues S298–D316 is cleaved from the precursor. S302 is subject to Phosphoserine.

Belongs to the peptidase C14A family. Heterotetramer that consists of two anti-parallel arranged heterodimers, each one formed by a 20 kDa (Caspase-1 subunit p20) and a 10 kDa (Caspase-1 subunit p10) subunit. May be a component of the inflammasome, a protein complex which also includes PYCARD, CARD8 and NLRP2 and whose function would be the activation of pro-inflammatory caspases. Component of the AIM2 PANoptosome complex, a multiprotein complex that drives inflammatory cell death (PANoptosis). Both the p10 and p20 subunits interact with MEFV. Interacts with CARD17P/INCA and CARD18. Interacts with SERPINB1; this interaction regulates CASP1 activity. As to quaternary structure, heterotetramer that consists of two anti-parallel arranged heterodimers, each one formed by a 20 kDa (Caspase-1 subunit p20) and a 10 kDa (Caspase-1 subunit p10) subunit. Post-translationally, the two subunits are derived from the precursor sequence by an autocatalytic mechanism. Ubiquitinated via 'Lys-11'-linked polyubiquitination. Deubiquitinated by USP8.

It is found in the cytoplasm. It localises to the cell membrane. It catalyses the reaction Strict requirement for an Asp residue at position P1 and has a preferred cleavage sequence of Tyr-Val-Ala-Asp-|-.. Functionally, thiol protease involved in a variety of inflammatory processes by proteolytically cleaving other proteins, such as the precursors of the inflammatory cytokines interleukin-1 beta (IL1B) and interleukin 18 (IL18) as well as the pyroptosis inducer Gasdermin-D (GSDMD), into active mature peptides. Plays a key role in cell immunity as an inflammatory response initiator: once activated through formation of an inflammasome complex, it initiates a pro-inflammatory response through the cleavage of the two inflammatory cytokines IL1B and IL18, releasing the mature cytokines which are involved in a variety of inflammatory processes. Cleaves a tetrapeptide after an Asp residue at position P1. Also initiates pyroptosis, a programmed lytic cell death pathway, through cleavage of GSDMD. In contrast to cleavage of interleukin IL1B, recognition and cleavage of GSDMD is not strictly dependent on the consensus cleavage site but depends on an exosite interface on CASP1 that recognizes and binds the Gasdermin-D, C-terminal (GSDMD-CT) part. Cleaves and activates CASP7 in response to bacterial infection, promoting plasma membrane repair. Upon inflammasome activation, during DNA virus infection but not RNA virus challenge, controls antiviral immunity through the cleavage of CGAS, rendering it inactive. In apoptotic cells, cleaves SPHK2 which is released from cells and remains enzymatically active extracellularly. The protein is Caspase-1 (CASP1) of Sus scrofa (Pig).